The primary structure comprises 226 residues: Charged multivesicular body protein 5 (226 aa).

The stretch at 21–93 forms a coiled coil; that stretch reads IAGVDARATN…NQSFNMEQAN (73 aa). A compositionally biased stretch (basic and acidic residues) spans 188–198; that stretch reads KAPEAPSREPG. The segment at 188–226 is disordered; that stretch reads KAPEAPSREPGADSIVPGKSTIETDEFGLPKIPTSLKTT. The residue at position 201 (S201) is a Phosphoserine. T226 carries the post-translational modification Phosphothreonine.

The protein belongs to the SNF7 family. As to quaternary structure, probable peripherally associated component of the endosomal sorting required for transport complex III (ESCRT-III).

It localises to the endosome membrane. Probable peripherally associated component of the endosomal sorting required for transport complex III (ESCRT-III) which is involved in multivesicular bodies (MVBs) formation and sorting of endosomal cargo proteins into MVBs. MVBs contain intraluminal vesicles (ILVs) that are generated by invagination and scission from the limiting membrane of the endosome and are delivered to lysosomes enabling degradation of membrane proteins. Specifically down-regulates Notch signaling activity in the germarium, probably by facilitating Notch endocytosis. This is Charged multivesicular body protein 5 from Drosophila melanogaster (Fruit fly).